Reading from the N-terminus, the 277-residue chain is Alpha-ketoglutarate-dependent dioxygenase tstK (277 aa).

It belongs to the asaB hydroxylase/desaturase family.

The enzyme catalyses 2-[(1R,8S,14R,15R)-11-hydroxy-14,15-bis[(6E)-oct-6-en-1-yl]-3,5,9-trioxo-4,10-dioxatetracyclo[9.4.0.0(2,6).0(8,12)]pentadeca-2(6),12-dien-8-yl]acetate + 3 2-oxoglutarate + 3 O2 = phomoidride A + 3 succinate + 3 CO2 + H2O. In terms of biological role, alpha-ketoglutarate-dependent dioxygenase; part of the gene cluster that mediates the biosynthesis of the antihypercholesterolemic agents phomoidrides which are dimeric anhydrides. Within the pathway, tstK is responsible for the iterative oxidation necessary to convert prephomoidride to phomoidride A. The pathway begins with the highly reducing polyketide synthase tstiA that catalyzes the formation of a C12-fatty acyl-ACP, starting from one acetate and 5 malonate units. The hydrolase tstM is involved in the release of the C12-fatty acyl chain from phiA. The alkylcitrate synthase (ACS) tstJ and the alkylcitrate dehydratase (ACDH) tstI then give rise to decarboxylated monomeric anhydrides by coupling the C12-fatty acyl chain with oxalacetic acid. The cyclase tstC is responsible for the dimerization of the monomeric anhydrides which leads to the production of prephomoidride that contains the characteristic bicyclo[4.3.1]deca-1,6-diene system of phomoidrides. Iterative oxidation catalyzed by the alpha-ketoglutarate-dependent dioxygenase tstK produced then phomoidride A. Finally, the methyltransferase tstE converts phomoidride A to phomoidride B via an acetalization reaction. The phosphatidylethanolamine-binding protein tstB and tstN are not essential for dimerization and their functions have still to be determined. The polypeptide is Alpha-ketoglutarate-dependent dioxygenase tstK (Talaromyces stipitatus (strain ATCC 10500 / CBS 375.48 / QM 6759 / NRRL 1006) (Penicillium stipitatum)).